Reading from the N-terminus, the 370-residue chain is 3-isopropylmalate dehydrogenase (370 aa).

77–90 (GPKWDSVPYEVRPE) contacts NAD(+). Positions 97, 107, 135, and 226 each coordinate substrate. Residues aspartate 226, aspartate 250, and aspartate 254 each coordinate Mg(2+). 290 to 302 (GSAPDIAGKGIAN) provides a ligand contact to NAD(+).

Belongs to the isocitrate and isopropylmalate dehydrogenases family. LeuB type 1 subfamily. In terms of assembly, homodimer. Mg(2+) serves as cofactor. It depends on Mn(2+) as a cofactor.

It localises to the cytoplasm. The enzyme catalyses (2R,3S)-3-isopropylmalate + NAD(+) = 4-methyl-2-oxopentanoate + CO2 + NADH. It functions in the pathway amino-acid biosynthesis; L-leucine biosynthesis; L-leucine from 3-methyl-2-oxobutanoate: step 3/4. In terms of biological role, catalyzes the oxidation of 3-carboxy-2-hydroxy-4-methylpentanoate (3-isopropylmalate) to 3-carboxy-4-methyl-2-oxopentanoate. The product decarboxylates to 4-methyl-2 oxopentanoate. The chain is 3-isopropylmalate dehydrogenase from Rhizobium johnstonii (strain DSM 114642 / LMG 32736 / 3841) (Rhizobium leguminosarum bv. viciae).